The chain runs to 188 residues: MNAFFDSFKNHFLISMPHLDDPHFEHTVIYLCEHTKAGAMGIIINRPSNVDFTELADHLGIQIHSPRLSSEPIYTGGPVEAERGFILHTTDKVWSNTLRVTDEVSLSASLEALEDIAQGNGPDAFRITLGCAGWDAGQLEAEIANNDWLVCEADLDVLFHTPSDMQFTAATRVLGIDMTRLSPDIGHG.

The protein belongs to the UPF0301 (AlgH) family.

The protein is UPF0301 protein Mmwyl1_0539 of Marinomonas sp. (strain MWYL1).